Consider the following 263-residue polypeptide: Glucosamine-6-phosphate deaminase (263 aa).

The active-site Proton acceptor; for enolization step is D72. D141 acts as the For ring-opening step in catalysis. The active-site Proton acceptor; for ring-opening step is H143. The active-site For ring-opening step is E148.

The protein belongs to the glucosamine/galactosamine-6-phosphate isomerase family. NagB subfamily.

It catalyses the reaction alpha-D-glucosamine 6-phosphate + H2O = beta-D-fructose 6-phosphate + NH4(+). It functions in the pathway amino-sugar metabolism; N-acetylneuraminate degradation; D-fructose 6-phosphate from N-acetylneuraminate: step 5/5. With respect to regulation, allosterically activated by N-acetylglucosamine 6-phosphate (GlcNAc6P). Functionally, catalyzes the reversible isomerization-deamination of glucosamine 6-phosphate (GlcN6P) to form fructose 6-phosphate (Fru6P) and ammonium ion. This chain is Glucosamine-6-phosphate deaminase, found in Porphyromonas gingivalis (strain ATCC 33277 / DSM 20709 / CIP 103683 / JCM 12257 / NCTC 11834 / 2561).